The primary structure comprises 262 residues: Intercellular adhesion molecule 4 (262 aa).

Residues 1–22 (MESALLLPSLLLVAAYPRGGSP) form the signal peptide. Residues 23-231 (QQEWMQSPPA…LTVLALSPAS (209 aa)) lie on the Extracellular side of the membrane. Ig-like C2-type domains lie at 54–116 (GGSA…TREA) and 138–209 (GHKY…LNLD). 3 N-linked (GlcNAc...) asparagine glycosylation sites follow: Asn60, Asn84, and Asn182. Cystine bridges form between Cys61-Cys105, Cys61-Cys109, Cys65-Cys109, and Cys145-Cys202. A helical membrane pass occupies residues 232-252 (IALASTSIATLVGILLAVGAV). At 253 to 262 (YVRKYLAVQT) the chain is on the cytoplasmic side.

It belongs to the immunoglobulin superfamily. ICAM family.

The protein localises to the cell membrane. It is found in the secreted. Adhesion molecule that binds to leukocyte adhesion LFA-1 protein LFA-1 (integrin alpha-L/beta-2). ICAM4 is also a ligand for alpha-4/beta-1 and alpha-V integrins. Isoform 2 may modulate binding of membrane-associated ICAM4. The protein is Intercellular adhesion molecule 4 (Icam4) of Mus musculus (Mouse).